Here is a 643-residue protein sequence, read N- to C-terminus: Zinc finger protein 64 (643 aa).

11 consecutive C2H2-type zinc fingers follow at residues 173–195, 201–223, 229–251, 297–322, 328–350, 356–378, 384–406, 412–434, 440–463, 465–487, and 493–515; these read HKCE…MRCH, YKCK…LRIH, FKCQ…LRSH, FNCR…LRIH, HKCH…LRIH, YKCQ…LRSH, FQCW…MIVH, FKCE…RIKH, FKCL…SRLH, and EKCP…SRVH. 8 residues coordinate Zn(2+): C495, C498, H511, H515, C523, C526, H539, and H544. A compositionally biased stretch (basic and acidic residues) spans 538 to 552; sequence KHIDKVHREGAKTEN. The disordered stretch occupies residues 538–571; sequence KHIDKVHREGAKTENRAPPGKDGPGESGPHHVPN. Residues 578-600 form a C2H2-type 12 zinc finger; it reads FGCDKCGASFVRDDSLRCHRKQH.

Belongs to the krueppel C2H2-type zinc-finger protein family. Interacts with NOTCH1. Widely expressed. Expressed in the brain, spleen, liver, and heart.

The protein localises to the nucleus. May be involved in the regulation of mesenchymal cell differentiation through transactivation of NOTCH1 target genes. This is Zinc finger protein 64 from Mus musculus (Mouse).